The following is a 144-amino-acid chain: Large ribosomal subunit protein uL15 (144 aa).

Residues 1–58 (MQLNDLRSAPGARREKLRPGRGIGSGLGKTGGRGHKGQTSRSGGKIAPGFEGGQQPLH) are disordered. Residues 21–31 (RGIGSGLGKTG) are compositionally biased toward gly residues.

This sequence belongs to the universal ribosomal protein uL15 family. Part of the 50S ribosomal subunit.

In terms of biological role, binds to the 23S rRNA. This chain is Large ribosomal subunit protein uL15, found in Azotobacter vinelandii (strain DJ / ATCC BAA-1303).